The sequence spans 203 residues: Large ribosomal subunit protein bL25 (203 aa).

Belongs to the bacterial ribosomal protein bL25 family. CTC subfamily. As to quaternary structure, part of the 50S ribosomal subunit; part of the 5S rRNA/L5/L18/L25 subcomplex. Contacts the 5S rRNA. Binds to the 5S rRNA independently of L5 and L18.

This is one of the proteins that binds to the 5S RNA in the ribosome where it forms part of the central protuberance. This chain is Large ribosomal subunit protein bL25, found in Rickettsia conorii (strain ATCC VR-613 / Malish 7).